The sequence spans 287 residues: 2-dehydro-3-deoxyphosphooctonate aldolase (287 aa).

The protein belongs to the KdsA family.

It localises to the cytoplasm. The enzyme catalyses D-arabinose 5-phosphate + phosphoenolpyruvate + H2O = 3-deoxy-alpha-D-manno-2-octulosonate-8-phosphate + phosphate. Its pathway is carbohydrate biosynthesis; 3-deoxy-D-manno-octulosonate biosynthesis; 3-deoxy-D-manno-octulosonate from D-ribulose 5-phosphate: step 2/3. It participates in bacterial outer membrane biogenesis; lipopolysaccharide biosynthesis. This chain is 2-dehydro-3-deoxyphosphooctonate aldolase, found in Rhodopseudomonas palustris (strain TIE-1).